Reading from the N-terminus, the 209-residue chain is Protein GrpE (209 aa).

Composition is skewed to basic and acidic residues over residues 1–16 (MKKS…KEES) and 34–44 (KAGEKTAEPEK). Residues 1-61 (MKKSTKKEST…EKSPEAACRE (61 aa)) form a disordered region.

The protein belongs to the GrpE family. In terms of assembly, homodimer.

Its subcellular location is the cytoplasm. Functionally, participates actively in the response to hyperosmotic and heat shock by preventing the aggregation of stress-denatured proteins, in association with DnaK and GrpE. It is the nucleotide exchange factor for DnaK and may function as a thermosensor. Unfolded proteins bind initially to DnaJ; upon interaction with the DnaJ-bound protein, DnaK hydrolyzes its bound ATP, resulting in the formation of a stable complex. GrpE releases ADP from DnaK; ATP binding to DnaK triggers the release of the substrate protein, thus completing the reaction cycle. Several rounds of ATP-dependent interactions between DnaJ, DnaK and GrpE are required for fully efficient folding. The chain is Protein GrpE from Methanosarcina acetivorans (strain ATCC 35395 / DSM 2834 / JCM 12185 / C2A).